Here is a 523-residue protein sequence, read N- to C-terminus: UvrABC system protein C (523 aa).

A GIY-YIG domain is found at 15-93 (HLPGCYLFKD…IKKHWPRYNI (79 aa)). Residues 197-232 (RELIESMETEMKEMAAKQMFEQAMELRDEIAALEYL) form the UVR domain.

It belongs to the UvrC family. As to quaternary structure, interacts with UvrB in an incision complex.

It is found in the cytoplasm. Its function is as follows. The UvrABC repair system catalyzes the recognition and processing of DNA lesions. UvrC both incises the 5' and 3' sides of the lesion. The N-terminal half is responsible for the 3' incision and the C-terminal half is responsible for the 5' incision. The chain is UvrABC system protein C from Methanosarcina mazei (strain ATCC BAA-159 / DSM 3647 / Goe1 / Go1 / JCM 11833 / OCM 88) (Methanosarcina frisia).